We begin with the raw amino-acid sequence, 522 residues long: GMP synthase [glutamine-hydrolyzing] (522 aa).

A Glutamine amidotransferase type-1 domain is found at 9–204 (KILILDFGAQ…VVDICGCQTL (196 aa)). Cysteine 86 acts as the Nucleophile in catalysis. Catalysis depends on residues histidine 178 and glutamate 180. The region spanning 205-397 (WTSANIIEDQ…LGLPHAMVYR (193 aa)) is the GMPS ATP-PPase domain. 232 to 238 (SGGVDSS) lines the ATP pocket.

As to quaternary structure, homodimer.

It carries out the reaction XMP + L-glutamine + ATP + H2O = GMP + L-glutamate + AMP + diphosphate + 2 H(+). It participates in purine metabolism; GMP biosynthesis; GMP from XMP (L-Gln route): step 1/1. Functionally, catalyzes the synthesis of GMP from XMP. The sequence is that of GMP synthase [glutamine-hydrolyzing] from Xylella fastidiosa (strain M23).